The following is a 545-amino-acid chain: MTILTQSTTWQALAAHSHQIPHMRELFAGDPARFSNMSLSTCGLFLDYSKNRATPETLNLLQTLAQEAKLDAKIKAMFAGDIINTTEKRAVLHTALRSTAEQSIVAEGQDIVPEVQQTLNKMQQFVTSVTSGQWKGFTGKAITDIVSIGIGGSFLGPKIVSQALRPYWITGLNCHFVANVDGTSISEKLKLLDPETTLFIMSSKSFGTQETLTNTLTAKAWFLAKGGSQSDVAKHFVAVTSNVAKATDFGIDADNIFPMWDWVGGRYSLWSAIGLPIALLIGMDNFRSLLKGAHQMDTHFANAPLAENMPVIMGLFSLWYGNFFNAQSHVVLTYDHYLRGLPAYFQQLDMESNGKSVTLNGTHVDYSTGPVIWGGEGTNGQHAYHQLLHQGTALIPADFIMPLQSHNPIGEHHDQLASNCFGQTQALMQGRTLDEALAELSKSSLSDEEKLLIAKHKVMPGNKPSNTLLMDKLTPETLGALIALYEHRTFVQGAIWDINSFDQWGVELGKSLGNDVLARIGAEQDATALDASSNGLINLYRQGKI.

E351 functions as the Proton donor in the catalytic mechanism. Catalysis depends on residues H382 and K510.

The protein belongs to the GPI family.

The protein resides in the cytoplasm. It carries out the reaction alpha-D-glucose 6-phosphate = beta-D-fructose 6-phosphate. The protein operates within carbohydrate biosynthesis; gluconeogenesis. It functions in the pathway carbohydrate degradation; glycolysis; D-glyceraldehyde 3-phosphate and glycerone phosphate from D-glucose: step 2/4. Its function is as follows. Catalyzes the reversible isomerization of glucose-6-phosphate to fructose-6-phosphate. This is Glucose-6-phosphate isomerase from Shewanella sp. (strain MR-4).